A 366-amino-acid chain; its full sequence is Cobalt-precorrin-5B C(1)-methyltransferase (366 aa).

This sequence belongs to the CbiD family.

It carries out the reaction Co-precorrin-5B + S-adenosyl-L-methionine = Co-precorrin-6A + S-adenosyl-L-homocysteine. The protein operates within cofactor biosynthesis; adenosylcobalamin biosynthesis; cob(II)yrinate a,c-diamide from sirohydrochlorin (anaerobic route): step 6/10. Catalyzes the methylation of C-1 in cobalt-precorrin-5B to form cobalt-precorrin-6A. The protein is Cobalt-precorrin-5B C(1)-methyltransferase of Pseudomonas aeruginosa (strain LESB58).